Consider the following 103-residue polypeptide: Large ribosomal subunit protein bL21 (103 aa).

It belongs to the bacterial ribosomal protein bL21 family. In terms of assembly, part of the 50S ribosomal subunit. Contacts protein L20.

In terms of biological role, this protein binds to 23S rRNA in the presence of protein L20. The sequence is that of Large ribosomal subunit protein bL21 from Shewanella woodyi (strain ATCC 51908 / MS32).